Consider the following 617-residue polypeptide: MAQTERRDAPELPDFSLLKRLARDQLIFLLEQLPGKKDLFIDADLMSPLDRIANVTILKQHEVDKLYKVELKPIVSSSDQLCFLIRPRIQTVKWISDLVNSDKVAGRFRRYKIIFTPQKFYACETVLEEQGVYGDVTTDEWNFYILPLDDDILSLELPEFFRDNFLEGDQRWVTTGGGALHLLQSVYGSFSKVYGIGRCAKMVYESWRELMEEGEQRTRQPEFAKVFLIDRDVDFVTPLCSQVVYEGLVDDIFRIKCSSVEFGPDVTSSDKSIKVMLNSQDKVFNEIRNEHFSNVFGFLSQKAKNLQTAYDKRRGMDIQQMKAFVADELKGLKQEHRLLSLHIGASESIMKKKTKQDFQELLKTEHSLLEGFEIRECIAYIEEHINRQVSMIDSLRLLCLLSITENGLLSKDYRSLKAQYLQSYGIEHLLTFANLRQLGLLEEQQTGETLTVMESKVGKLVNDKTAGKLTDAFSSLAKKSNFRALSKRLALVPKSGEEYDLRVPRDMAYIFSGAYIPLSCKLIEQVLERDGWTGLEEVTRMLNGQDFAVTGGSSSSEARNKSNGQRIILVMFLGGCTYSEISALRFLGKERGCRFIVLTTAITNSGRLLEALLDKHV.

The protein belongs to the STXBP/unc-18/SEC1 family. As to quaternary structure, interacts with vipas39. As to expression, widely expressed from 4 hours post-fertilization (hpf) to 24 hpf. At 48 hpf, localized to brain, retina, ear, liver and proximal intestine. This expression pattern is more pronounced at 72 hpf and persists through 5 days post-fertilization (dpf). At 3 dpf and 4 dpf, expression in the liver is predominantly in developing biliary epithelial cells. No expression detected in kidney or spinal cord.

The protein localises to the late endosome membrane. The protein resides in the lysosome membrane. Its function is as follows. May play a role in vesicle-mediated protein trafficking to lysosomal compartments and in membrane docking/fusion reactions of late endosomes/lysosomes. Required for proper trafficking and targeting of the collagen-modifying enzyme lysyl hydroxylase 3 (LH3) to intracellular collagen. Mediates phagolysosomal fusion in macrophages. Proposed to be involved in endosomal maturation implicating vipas39. In epithelial cells, the vps33b:vipas39 complex may play a role in the apical recycling pathway and in the maintenance of the apical-basolateral polarity. Plays a role in bile duct development. The protein is Vacuolar protein sorting-associated protein 33B of Danio rerio (Zebrafish).